The sequence spans 546 residues: ATP-dependent rRNA helicase RRP3 (546 aa).

The tract at residues 1–108 (MSDFKRRKLE…DEEAEAQAAA (108 aa)) is disordered. Acidic residues-rich tracts occupy residues 60–77 (SEED…EEED) and 94–103 (EAEQSDEEAE). The Q motif signature appears at 115–143 (KTFADLGVREELCDACENLGYKTATPIQT). The region spanning 146–318 (IPLALAGKDI…RAALKNPVRV (173 aa)) is the Helicase ATP-binding domain. 159–166 (AETGSGKT) contributes to the ATP binding site. A DEAD box motif is present at residues 265–268 (DEAD). The 149-residue stretch at 342-490 (YKDLYLIHLL…EEKVSRDEVM (149 aa)) folds into the Helicase C-terminal domain. The segment covering 504 to 515 (VREMKDLHDQRK) has biased composition (basic and acidic residues). A disordered region spans residues 504-546 (VREMKDLHDQRKSGRGGRGGGRGGGRGGRGRGGRRDNMDMDEG). Over residues 519–530 (GGRGGGRGGGRG) the composition is skewed to gly residues. Basic and acidic residues predominate over residues 536 to 546 (GRRDNMDMDEG).

The protein belongs to the DEAD box helicase family. DDX47/RRP3 subfamily. In terms of assembly, interacts with the SSU processome.

The protein resides in the nucleus. It catalyses the reaction ATP + H2O = ADP + phosphate + H(+). Functionally, ATP-dependent rRNA helicase required for pre-ribosomal RNA processing. Involved in the maturation of the 35S-pre-rRNA and to its cleavage to mature 18S rRNA. The protein is ATP-dependent rRNA helicase RRP3 of Phaeosphaeria nodorum (strain SN15 / ATCC MYA-4574 / FGSC 10173) (Glume blotch fungus).